Consider the following 651-residue polypeptide: Far upstream element-binding protein 1 (651 aa).

Disordered regions lie at residues 1 to 24 (MADY…GVVN) and 40 to 92 (KIGG…HQQQ). At alanine 2 the chain carries N-acetylalanine. Residues serine 48 and serine 51 each carry the phosphoserine modification. A compositionally biased stretch (basic and acidic residues) spans 61 to 73 (RPLEDGDQPDAKK). KH domains lie at 96-160 (VMTE…KRLL), 181-247 (NAVQ…KEMV), and 271-335 (NEGI…AEII). The residue at position 136 (serine 136) is a Phosphoserine. The residue at position 149 (threonine 149) is a Phosphothreonine. Arginine 317, arginine 355, arginine 357, and arginine 359 each carry omega-N-methylarginine. The 68-residue stretch at 372-439 (LQEFNFIVPT…QQIDYARQLI (68 aa)) folds into the KH 4 domain. Serine 411 is subject to Phosphoserine. Threonine 428 carries the post-translational modification Phosphothreonine. Disordered stretches follow at residues 443 to 528 (IGGP…GADP), 545 to 574 (AQPP…APAG), and 625 to 651 (TSPQ…HHLY). Residues 464-501 (PHGPPGPPGPGTPMGPYNPAPYNPGPPGPAPHGPPAPY) are compositionally biased toward pro residues. Low complexity-rich tracts occupy residues 514–528 (QQQA…GADP) and 552–574 (PAGA…APAG). A Phosphoserine modification is found at serine 626.

In terms of assembly, found in a complex with PUF60 and far upstream element (FUSE) DNA segment. Interacts with PUF60 and JTV1. Ubiquitinated. This targets the protein for proteasome-mediated degradation.

It localises to the nucleus. Functionally, regulates MYC expression by binding to a single-stranded far-upstream element (FUSE) upstream of the MYC promoter. May act both as activator and repressor of transcription. The sequence is that of Far upstream element-binding protein 1 (Fubp1) from Mus musculus (Mouse).